We begin with the raw amino-acid sequence, 328 residues long: Endo-beta-1,4-glucanase B (328 aa).

The signal sequence occupies residues 1-17 (MKVNTLLVAVAAGTAMA). N-linked (GlcNAc...) asparagine glycosylation is present at asparagine 95. The Proton donor role is filled by glutamate 155. Glutamate 262 functions as the Nucleophile in the catalytic mechanism.

This sequence belongs to the glycosyl hydrolase 5 (cellulase A) family.

The protein resides in the secreted. It carries out the reaction Endohydrolysis of (1-&gt;4)-beta-D-glucosidic linkages in cellulose, lichenin and cereal beta-D-glucans.. Its function is as follows. Has endoglucanase activity on substrates containing beta-1,4 glycosidic bonds, like in carboxymethylcellulose (CMC), hydroxyethylcellulose (HEC) and beta-glucan. Involved in the degradation of complex natural cellulosic substrates. This chain is Endo-beta-1,4-glucanase B (eglB), found in Emericella nidulans (strain FGSC A4 / ATCC 38163 / CBS 112.46 / NRRL 194 / M139) (Aspergillus nidulans).